Consider the following 340-residue polypeptide: NADH-quinone oxidoreductase subunit H (340 aa).

8 helical membrane passes run 4 to 24 (TIGILIWIIIKILVIVVPLLI), 78 to 98 (YLFVIAPLFALVPSLVGWAVI), 113 to 133 (VLYLFAMSSLGVYGVLIAGWA), 151 to 171 (VSYEIAMGFALVGVLLAAGSM), 184 to 204 (MLHWWFIPLLPLFLVFWIAGI), 244 to 264 (SMILISTFMAILFMGGWLSPF), 273 to 293 (IFFVVPGFVWLLLKISFFLFV), and 316 to 336 (VLIPVTIVWLIVTSLMVVAHV).

This sequence belongs to the complex I subunit 1 family. NDH-1 is composed of 14 different subunits. Subunits NuoA, H, J, K, L, M, N constitute the membrane sector of the complex.

Its subcellular location is the cell inner membrane. It carries out the reaction a quinone + NADH + 5 H(+)(in) = a quinol + NAD(+) + 4 H(+)(out). NDH-1 shuttles electrons from NADH, via FMN and iron-sulfur (Fe-S) centers, to quinones in the respiratory chain. The immediate electron acceptor for the enzyme in this species is believed to be ubiquinone. Couples the redox reaction to proton translocation (for every two electrons transferred, four hydrogen ions are translocated across the cytoplasmic membrane), and thus conserves the redox energy in a proton gradient. This subunit may bind ubiquinone. The sequence is that of NADH-quinone oxidoreductase subunit H from Legionella pneumophila (strain Corby).